Reading from the N-terminus, the 343-residue chain is D-erythrose-4-phosphate dehydrogenase (343 aa).

Residue 12–13 (RI) coordinates NAD(+). Residues 154–156 (SCT), R200, 213–214 (TK), and R236 each bind substrate. C155 acts as the Nucleophile in catalysis. N318 is an NAD(+) binding site.

The protein belongs to the glyceraldehyde-3-phosphate dehydrogenase family. Epd subfamily. As to quaternary structure, homotetramer.

Its subcellular location is the cytoplasm. It catalyses the reaction D-erythrose 4-phosphate + NAD(+) + H2O = 4-phospho-D-erythronate + NADH + 2 H(+). It participates in cofactor biosynthesis; pyridoxine 5'-phosphate biosynthesis; pyridoxine 5'-phosphate from D-erythrose 4-phosphate: step 1/5. Functionally, catalyzes the NAD-dependent conversion of D-erythrose 4-phosphate to 4-phosphoerythronate. In Pseudoalteromonas translucida (strain TAC 125), this protein is D-erythrose-4-phosphate dehydrogenase.